A 224-amino-acid polypeptide reads, in one-letter code: MSLMNLPEESRPREKLLALGPKSLTDAELLAIFLRTGTQGMNAIELADKLLKEFGSLRKLLSSDENEFCSHKGLGTAKFAQLQAVVEMTERYLFEKIEKEDALTSPEHTKRYLTRMLRDRHREAFYVLFLDNQHRVLKGEILFEGTIDVAAVYPREVVKRSIDYNAAAIILAHNHPSGVAEPSQADRRITKRISDAVELVDIRVLDHFVIGDGEIVSFAERGWI.

Residues 102–224 (ALTSPEHTKR…IVSFAERGWI (123 aa)) form the MPN domain. Histidine 173, histidine 175, and aspartate 186 together coordinate Zn(2+). The JAMM motif motif lies at 173-186 (HNHPSGVAEPSQAD).

It belongs to the UPF0758 family.

In Aliivibrio fischeri (strain ATCC 700601 / ES114) (Vibrio fischeri), this protein is UPF0758 protein VF_0126.